The following is a 249-amino-acid chain: NADH dehydrogenase [ubiquinone] flavoprotein 2, mitochondrial (249 aa).

A mitochondrion-targeting transit peptide spans 1–32 (MFFSAALRARAAGLTAQWGRHVRNLHKTAMQN). Position 61 is an N6-acetyllysine (Lys61). [2Fe-2S] cluster is bound by residues Cys135, Cys140, Cys176, and Cys180. Phosphotyrosine; by SRC is present on Tyr193. Residues 213–249 (IPKPGPRSGRFSCEPAGGLTSLTEPPKGPGFGVQAGL) form a disordered region.

Belongs to the complex I 24 kDa subunit family. In terms of assembly, core subunit of respiratory chain NADH dehydrogenase (Complex I) which is composed of 45 different subunits. This is a component of the flavoprotein-sulfur (FP) fragment of the enzyme. It depends on [2Fe-2S] cluster as a cofactor.

The protein resides in the mitochondrion inner membrane. The enzyme catalyses a ubiquinone + NADH + 5 H(+)(in) = a ubiquinol + NAD(+) + 4 H(+)(out). Its function is as follows. Core subunit of the mitochondrial membrane respiratory chain NADH dehydrogenase (Complex I) which catalyzes electron transfer from NADH through the respiratory chain, using ubiquinone as an electron acceptor. Parts of the peripheral arm of the enzyme, where the electrons from NADH are accepted by flavin mononucleotide (FMN) and then passed along a chain of iron-sulfur clusters by electron tunnelling to the final acceptor ubiquinone. Contains one iron-sulfur cluster. This Gorilla gorilla gorilla (Western lowland gorilla) protein is NADH dehydrogenase [ubiquinone] flavoprotein 2, mitochondrial.